We begin with the raw amino-acid sequence, 218 residues long: Glutathione S-transferase Y1 (218 aa).

One can recognise a GST N-terminal domain in the interval 2 to 88 (PMILGYWNVR…YIARKHNLCG (87 aa)). Residues 7 to 8 (YW), 46 to 50 (WLNEK), 59 to 60 (NL), and 72 to 73 (QS) each bind glutathione. The GST C-terminal domain occupies 90-208 (TEEERIRVDI…KTSRFLRRPI (119 aa)). Tyrosine 116 contributes to the substrate binding site.

This sequence belongs to the GST superfamily. Mu family. Homodimer.

Its subcellular location is the cytoplasm. The enzyme catalyses RX + glutathione = an S-substituted glutathione + a halide anion + H(+). Its function is as follows. Conjugation of reduced glutathione to a wide number of exogenous and endogenous hydrophobic electrophiles. The chain is Glutathione S-transferase Y1 from Cricetulus longicaudatus (Long-tailed dwarf hamster).